A 259-amino-acid polypeptide reads, in one-letter code: Protein N-terminal and lysine N-methyltransferase efm7 (259 aa).

Residues W56, G83–A85, D105, W139, and A163 contribute to the S-adenosyl-L-methionine site.

The protein belongs to the class I-like SAM-binding methyltransferase superfamily. EFM7 family.

It is found in the cytoplasm. Its function is as follows. S-adenosyl-L-methionine-dependent protein methyltransferase that trimethylates the N-terminal glycine 'Gly-2' of elongation factor 1-alpha, before also catalyzing the mono- and dimethylation of 'Lys-3'. The sequence is that of Protein N-terminal and lysine N-methyltransferase efm7 from Aspergillus fumigatus (strain ATCC MYA-4609 / CBS 101355 / FGSC A1100 / Af293) (Neosartorya fumigata).